The chain runs to 177 residues: Probable inosine/xanthosine triphosphatase (177 aa).

The protein belongs to the YjjX NTPase family. As to quaternary structure, homodimer. Mg(2+) is required as a cofactor. The cofactor is Mn(2+).

It carries out the reaction XTP + H2O = XDP + phosphate + H(+). The enzyme catalyses ITP + H2O = IDP + phosphate + H(+). Functionally, phosphatase that hydrolyzes non-canonical purine nucleotides such as XTP and ITP to their respective diphosphate derivatives. Probably excludes non-canonical purines from DNA/RNA precursor pool, thus preventing their incorporation into DNA/RNA and avoiding chromosomal lesions. The sequence is that of Probable inosine/xanthosine triphosphatase from Halalkalibacterium halodurans (strain ATCC BAA-125 / DSM 18197 / FERM 7344 / JCM 9153 / C-125) (Bacillus halodurans).